We begin with the raw amino-acid sequence, 46 residues long: uncharacterized protein (46 aa).

This sequence to equivalent protein in phage 82.

This is an uncharacterized protein from Escherichia coli (strain K12).